A 980-amino-acid chain; its full sequence is NACHT, LRR and PYD domains-containing protein 7 (980 aa).

The 93-residue stretch at 1 to 93 folds into the Pyrin domain; that stretch reads MTSPQLEWTL…CKMAKAEMME (93 aa). The segment at 104 to 123 is disordered; it reads ELGDAEEDSELAKPGEKEGW. Residues 113–123 are compositionally biased toward basic and acidic residues; sequence ELAKPGEKEGW. In terms of domain architecture, NACHT spans 172 to 491; that stretch reads YTVVLHGPAG…LEKEEGEDRD (320 aa). ATP is bound at residue 178-185; the sequence is GPAGVGKT. LRR repeat units lie at residues 614–638, 674–697, 760–784, 788–810, 817–840, 845–868, 874–897, 902–928, and 933–957; these read CQDLQKLSLQVAKGVFLENYMDFEL, NSNLKFLEVKQSFLSDSSVRILCD, KCNLQYLRLGGHCATPEQWAEFFYV, NQSLKHLRLSANVLLDEGAMLLY, KHFLQMLSLENCRLTEASCKDLAA, SKKLTHLCLAKNPIGDTGVKFLCE, DCKLQTLVLQQCSITKLGCRYLSE, ACSLTNLDLSINQIARGLWILCQALEN, and LKHLRLKTYETNLEIKKLLEEVKEK.

This sequence belongs to the NLRP family. In terms of assembly, directly interacts with CASP1 and IL1B. Expressed in numerous tissues including uterus and ovary, with low levels in heart and brain. Not detected in skeletal muscle.

Inhibits CASP1/caspase-1-dependent IL1B secretion. The chain is NACHT, LRR and PYD domains-containing protein 7 (NLRP7) from Homo sapiens (Human).